A 66-amino-acid chain; its full sequence is Large ribosomal subunit protein bL35 (66 aa).

This sequence belongs to the bacterial ribosomal protein bL35 family.

In Synechococcus sp. (strain JA-2-3B'a(2-13)) (Cyanobacteria bacterium Yellowstone B-Prime), this protein is Large ribosomal subunit protein bL35.